The following is a 411-amino-acid chain: UPF0754 membrane protein Npun_R4433 (411 aa).

2 helical membrane passes run tryptophan 3 to threonine 23 and isoleucine 387 to valine 407.

Belongs to the UPF0754 family.

It is found in the cell inner membrane. In Nostoc punctiforme (strain ATCC 29133 / PCC 73102), this protein is UPF0754 membrane protein Npun_R4433.